The primary structure comprises 252 residues: Probable transcriptional regulatory protein RF_0799 (252 aa).

Positions 1–21 are disordered; it reads MAGHSKFKNIQHRKGAQDKKR.

It belongs to the TACO1 family.

The protein localises to the cytoplasm. The protein is Probable transcriptional regulatory protein RF_0799 of Rickettsia felis (strain ATCC VR-1525 / URRWXCal2) (Rickettsia azadi).